The chain runs to 202 residues: Orotate phosphoribosyltransferase (202 aa).

5-phospho-alpha-D-ribose 1-diphosphate-binding positions include K93 and 113 to 121 (EDIITTGGS). Orotate contacts are provided by T117 and R145.

This sequence belongs to the purine/pyrimidine phosphoribosyltransferase family. PyrE subfamily. As to quaternary structure, homodimer. It depends on Mg(2+) as a cofactor.

The enzyme catalyses orotidine 5'-phosphate + diphosphate = orotate + 5-phospho-alpha-D-ribose 1-diphosphate. It functions in the pathway pyrimidine metabolism; UMP biosynthesis via de novo pathway; UMP from orotate: step 1/2. Its function is as follows. Catalyzes the transfer of a ribosyl phosphate group from 5-phosphoribose 1-diphosphate to orotate, leading to the formation of orotidine monophosphate (OMP). The protein is Orotate phosphoribosyltransferase of Campylobacter curvus (strain 525.92).